A 430-amino-acid chain; its full sequence is tRNA(Ile)-lysidine synthase (430 aa).

21 to 26 lines the ATP pocket; sequence SGGLDS.

This sequence belongs to the tRNA(Ile)-lysidine synthase family.

Its subcellular location is the cytoplasm. It carries out the reaction cytidine(34) in tRNA(Ile2) + L-lysine + ATP = lysidine(34) in tRNA(Ile2) + AMP + diphosphate + H(+). Functionally, ligates lysine onto the cytidine present at position 34 of the AUA codon-specific tRNA(Ile) that contains the anticodon CAU, in an ATP-dependent manner. Cytidine is converted to lysidine, thus changing the amino acid specificity of the tRNA from methionine to isoleucine. The polypeptide is tRNA(Ile)-lysidine synthase (Salmonella typhimurium (strain LT2 / SGSC1412 / ATCC 700720)).